The following is a 606-amino-acid chain: Aspartate--tRNA(Asp/Asn) ligase (606 aa).

Position 177 (glutamate 177) interacts with L-aspartate. The segment at 201-204 is aspartate; it reads QLFK. Arginine 223 contacts L-aspartate. ATP is bound by residues 223 to 225 and glutamine 232; that span reads RDE. Histidine 461 serves as a coordination point for L-aspartate. An ATP-binding site is contributed by glutamate 499. Residue arginine 506 participates in L-aspartate binding. Residue 551–554 participates in ATP binding; sequence GLDR.

The protein belongs to the class-II aminoacyl-tRNA synthetase family. Type 1 subfamily. As to quaternary structure, homodimer.

The protein resides in the cytoplasm. It carries out the reaction tRNA(Asx) + L-aspartate + ATP = L-aspartyl-tRNA(Asx) + AMP + diphosphate. In terms of biological role, aspartyl-tRNA synthetase with relaxed tRNA specificity since it is able to aspartylate not only its cognate tRNA(Asp) but also tRNA(Asn). Reaction proceeds in two steps: L-aspartate is first activated by ATP to form Asp-AMP and then transferred to the acceptor end of tRNA(Asp/Asn). The protein is Aspartate--tRNA(Asp/Asn) ligase of Prochlorococcus marinus (strain NATL2A).